The chain runs to 55 residues: Potassium channel toxin alpha-KTx 17.1 (55 aa).

The N-terminal stretch at 1–23 is a signal peptide; that stretch reads MKFIIVLILISVLIATIVPVNEA. Gln24 carries the post-translational modification Pyrrolidone carboxylic acid. Cystine bridges form between Cys27/Cys43, Cys33/Cys48, and Cys37/Cys50. Thr53 bears the Threonine amide mark.

Belongs to the short scorpion toxin superfamily. Potassium channel inhibitor family. Alpha-KTx 17 subfamily. In terms of tissue distribution, expressed by the venom gland.

It localises to the secreted. In terms of biological role, blocker of potassium channels, which inhibits both the delayed rectifier and fast transient potassium current. The inhibition is reversible and voltage-independent. It causes a depolarizing shift of the steady-state activation curve of the currents, without changing their steady-state inactivation behavior. The protein is Potassium channel toxin alpha-KTx 17.1 of Olivierus martensii (Manchurian scorpion).